We begin with the raw amino-acid sequence, 239 residues long: Probable fimbrial chaperone YehC (239 aa).

A signal peptide spans 1 to 31 (MAAIPWRPFNLRGIKMKGLLSLLIFSMVLPA).

The protein belongs to the periplasmic pilus chaperone family.

It localises to the periplasm. Part of the yehABCD fimbrial operon. Could contribute to adhesion to various surfaces in specific environmental niches. The sequence is that of Probable fimbrial chaperone YehC (yehC) from Escherichia coli (strain K12).